The primary structure comprises 127 residues: Ribonuclease P protein component (127 aa).

It belongs to the RnpA family. As to quaternary structure, consists of a catalytic RNA component (M1 or rnpB) and a protein subunit.

It catalyses the reaction Endonucleolytic cleavage of RNA, removing 5'-extranucleotides from tRNA precursor.. RNaseP catalyzes the removal of the 5'-leader sequence from pre-tRNA to produce the mature 5'-terminus. It can also cleave other RNA substrates such as 4.5S RNA. The protein component plays an auxiliary but essential role in vivo by binding to the 5'-leader sequence and broadening the substrate specificity of the ribozyme. This chain is Ribonuclease P protein component, found in Prochlorococcus marinus (strain SARG / CCMP1375 / SS120).